The primary structure comprises 506 residues: Glycerol kinase (506 aa).

Thr-12 is an ADP binding site. Residues Thr-12, Thr-13, and Ser-14 each coordinate ATP. Thr-12 is a binding site for sn-glycerol 3-phosphate. Arg-16 is an ADP binding site. Sn-glycerol 3-phosphate contacts are provided by Arg-82, Glu-83, Tyr-134, and Asp-246. Positions 82, 83, 134, 246, and 247 each coordinate glycerol. Residues Thr-268 and Gly-312 each coordinate ADP. ATP contacts are provided by Thr-268, Gly-312, Gln-316, and Gly-413. ADP is bound by residues Gly-413 and Asn-417.

The protein belongs to the FGGY kinase family.

It carries out the reaction glycerol + ATP = sn-glycerol 3-phosphate + ADP + H(+). The protein operates within polyol metabolism; glycerol degradation via glycerol kinase pathway; sn-glycerol 3-phosphate from glycerol: step 1/1. With respect to regulation, inhibited by fructose 1,6-bisphosphate (FBP). In terms of biological role, key enzyme in the regulation of glycerol uptake and metabolism. Catalyzes the phosphorylation of glycerol to yield sn-glycerol 3-phosphate. The polypeptide is Glycerol kinase (Leifsonia xyli subsp. xyli (strain CTCB07)).